Here is a 418-residue protein sequence, read N- to C-terminus: UDP-N-acetylglucosamine 1-carboxyvinyltransferase (418 aa).

22–23 is a binding site for phosphoenolpyruvate; that stretch reads KN. Position 92 (arginine 92) interacts with UDP-N-acetyl-alpha-D-glucosamine. Cysteine 116 functions as the Proton donor in the catalytic mechanism. 2-(S-cysteinyl)pyruvic acid O-phosphothioketal is present on cysteine 116. UDP-N-acetyl-alpha-D-glucosamine-binding positions include 121-125, aspartate 305, and leucine 327; that span reads RPIDL.

It belongs to the EPSP synthase family. MurA subfamily.

The protein resides in the cytoplasm. The enzyme catalyses phosphoenolpyruvate + UDP-N-acetyl-alpha-D-glucosamine = UDP-N-acetyl-3-O-(1-carboxyvinyl)-alpha-D-glucosamine + phosphate. The protein operates within cell wall biogenesis; peptidoglycan biosynthesis. Cell wall formation. Adds enolpyruvyl to UDP-N-acetylglucosamine. The polypeptide is UDP-N-acetylglucosamine 1-carboxyvinyltransferase (Campylobacter lari (strain RM2100 / D67 / ATCC BAA-1060)).